The primary structure comprises 50 residues: Sperm protamine P1 (50 aa).

This sequence belongs to the protamine P1 family. As to expression, testis.

The protein localises to the nucleus. It localises to the chromosome. Functionally, protamines substitute for histones in the chromatin of sperm during the haploid phase of spermatogenesis. They compact sperm DNA into a highly condensed, stable and inactive complex. The polypeptide is Sperm protamine P1 (PRM1) (Chilonatalus micropus (Cuban funnel-eared bat)).